The sequence spans 150 residues: Large ribosomal subunit protein uL23 (150 aa).

A disordered region spans residues 1-24 (MNKENKTQAVNKAKNTAKVAKKGS). The span at 7-18 (TQAVNKAKNTAK) shows a compositional bias: low complexity.

The protein belongs to the universal ribosomal protein uL23 family.

The chain is Large ribosomal subunit protein uL23 (RPL23A) from Tetrahymena thermophila (strain SB210).